The following is a 116-amino-acid chain: NADH-ubiquinone oxidoreductase chain 3 (116 aa).

Transmembrane regions (helical) follow at residues 3–23, 56–76, and 85–105; these read LILA…MIAF, FFLV…LLPL, and PTLA…GLIH.

The protein belongs to the complex I subunit 3 family.

Its subcellular location is the mitochondrion membrane. It catalyses the reaction a ubiquinone + NADH + 5 H(+)(in) = a ubiquinol + NAD(+) + 4 H(+)(out). Core subunit of the mitochondrial membrane respiratory chain NADH dehydrogenase (Complex I) that is believed to belong to the minimal assembly required for catalysis. Complex I functions in the transfer of electrons from NADH to the respiratory chain. The immediate electron acceptor for the enzyme is believed to be ubiquinone. The sequence is that of NADH-ubiquinone oxidoreductase chain 3 (MT-ND3) from Latimeria chalumnae (Coelacanth).